The sequence spans 325 residues: MNTSCEPILKPTLNKYVVFPIVYEDIWKMYKKAVASFWTVEEVDLSKDFSDWLKLSDNEKNFIKHILAFFAASDGIVNENLAERFYSEVQISEARCFYGFQIAMENIHSEMYSLLIDTYILDSKEKNYLFNAIENMNCVKQKANWAKKWIESKNRTYGERLVAFAAVEGIFFSGSFAAIFWIKKRGLMPGLTFSNELISRDEGLHCDFACIMFKHLLNPPLNSVVRDIIIEAVNIEKNFLTEAIPVKLIGMNCDLMKQYIEFVADRLLLELGCDKYYCSKNPFDFMENISLEGKTNFFEKRVSEYQKMSVMSNKKDNVFSLDIDF.

Positions 74, 105, and 108 each coordinate Fe cation. The active site involves Tyr112. Positions 168, 202, and 205 each coordinate Fe cation.

This sequence belongs to the ribonucleoside diphosphate reductase small chain family. In terms of assembly, heterodimer of a large and a small chain. It depends on Fe cation as a cofactor.

The enzyme catalyses a 2'-deoxyribonucleoside 5'-diphosphate + [thioredoxin]-disulfide + H2O = a ribonucleoside 5'-diphosphate + [thioredoxin]-dithiol. Its function is as follows. Ribonucleoside-diphosphate reductase holoenzyme provides the precursors necessary for viral DNA synthesis. Allows virus growth in non-dividing cells. Catalyzes the biosynthesis of deoxyribonucleotides from the corresponding ribonucleotides. The protein is Ribonucleoside-diphosphate reductase small chain of Yaba-like disease virus (YLDV).